Consider the following 475-residue polypeptide: Ribulose bisphosphate carboxylase large chain (475 aa).

Residues 1–2 (MS) constitute a propeptide that is removed on maturation. An N-acetylproline modification is found at Pro-3. Lys-14 carries the post-translational modification N6,N6,N6-trimethyllysine. Substrate contacts are provided by Asn-123 and Thr-173. Residue Lys-175 is the Proton acceptor of the active site. Lys-177 is a substrate binding site. Residues Lys-201, Asp-203, and Glu-204 each coordinate Mg(2+). An N6-carboxylysine modification is found at Lys-201. Residue His-294 is the Proton acceptor of the active site. Arg-295, His-327, and Ser-379 together coordinate substrate.

The protein belongs to the RuBisCO large chain family. Type I subfamily. As to quaternary structure, heterohexadecamer of 8 large chains and 8 small chains; disulfide-linked. The disulfide link is formed within the large subunit homodimers. Mg(2+) is required as a cofactor. The disulfide bond which can form in the large chain dimeric partners within the hexadecamer appears to be associated with oxidative stress and protein turnover.

Its subcellular location is the plastid. It is found in the chloroplast. It carries out the reaction 2 (2R)-3-phosphoglycerate + 2 H(+) = D-ribulose 1,5-bisphosphate + CO2 + H2O. It catalyses the reaction D-ribulose 1,5-bisphosphate + O2 = 2-phosphoglycolate + (2R)-3-phosphoglycerate + 2 H(+). In terms of biological role, ruBisCO catalyzes two reactions: the carboxylation of D-ribulose 1,5-bisphosphate, the primary event in carbon dioxide fixation, as well as the oxidative fragmentation of the pentose substrate in the photorespiration process. Both reactions occur simultaneously and in competition at the same active site. In Castanea sativa (Sweet chestnut), this protein is Ribulose bisphosphate carboxylase large chain.